The chain runs to 349 residues: UPF0324 inner membrane protein YeiH (349 aa).

The Periplasmic segment spans residues 1–12 (MTELTLQNHRRT). The helical transmembrane segment at 13–35 (MWHFIPGLALSAVITGVALWGGA) threads the bilayer. At 36–38 (IPA) the chain is on the cytoplasmic side. The helical transmembrane segment at 39–61 (VAGAGFSALTLAILLGMVIGNTV) threads the bilayer. Residues 62 to 99 (YPQIWKQCDGGVLFAKQHLLRLGIILYGFRLTFSQIAD) are Periplasmic-facing. A helical transmembrane segment spans residues 100 to 122 (VGISGIVIDVLTLSSTFMLACFL). Over 123–131 (GQKVFGLDR) the chain is Cytoplasmic. The helical transmembrane segment at 132–151 (HTSWLIGAGSSICGAAAVLA) threads the bilayer. Residues 152–162 (TEPVVKAEASK) lie on the Periplasmic side of the membrane. Residues 163 to 185 (VTVAVATVVIFGTIAIFLYPAMY) form a helical membrane-spanning segment. The Cytoplasmic portion of the chain corresponds to 186-261 (PLLAHWFSPE…SPATGAEKSK (76 aa)). A helical membrane pass occupies residues 262-284 (ITIPWFAIFFIVVAIFNSFHLLP). Topologically, residues 285 to 290 (KAVVDM) are periplasmic. A helical membrane pass occupies residues 291–313 (LVTLDTVLLAMAMAALGLTTHVS). Residues 314–322 (ALKKAGAKP) lie on the Cytoplasmic side of the membrane. The chain crosses the membrane as a helical span at residues 323–345 (LLMALALFAWLIIGGGAINVLIH). Residues 346–349 (SLIA) are Periplasmic-facing.

It belongs to the UPF0324 family.

Its subcellular location is the cell inner membrane. This is UPF0324 inner membrane protein YeiH (yeiH) from Salmonella typhi.